The sequence spans 287 residues: Deoxyuridine 5'-triphosphate nucleotidohydrolase (287 aa).

173–175 (RSG) lines the substrate pocket. Positions 264 to 275 (SSSKDTSDSQMS) are enriched in low complexity. Positions 264 to 287 (SSSKDTSDSQMSRGDAGLGSSGLM) are disordered.

The protein belongs to the dUTPase family. It depends on Mg(2+) as a cofactor.

It catalyses the reaction dUTP + H2O = dUMP + diphosphate + H(+). Functionally, involved in nucleotide metabolism: produces dUMP, the immediate precursor of thymidine nucleotides and decreases the intracellular concentration of dUTP to avoid uracil incorporation into viral DNA. The chain is Deoxyuridine 5'-triphosphate nucleotidohydrolase from Saimiriine herpesvirus 2 (strain 11) (SaHV-2).